The primary structure comprises 180 residues: Ribulose bisphosphate carboxylase small subunit, chloroplastic 1 (180 aa).

Residues 1–56 constitute a chloroplast transit peptide; sequence MASSVISSAAVATRTNVAQASMVAPFNGLKSAVSFPVSSKQNLDITSIASNGGRVQ.

This sequence belongs to the RuBisCO small chain family. Heterohexadecamer of 8 large and 8 small subunits.

It is found in the plastid. It localises to the chloroplast. Its function is as follows. RuBisCO catalyzes two reactions: the carboxylation of D-ribulose 1,5-bisphosphate, the primary event in carbon dioxide fixation, as well as the oxidative fragmentation of the pentose substrate. Both reactions occur simultaneously and in competition at the same active site. Although the small subunit is not catalytic it is essential for maximal activity. This Petunia hybrida (Petunia) protein is Ribulose bisphosphate carboxylase small subunit, chloroplastic 1.